The following is a 326-amino-acid chain: Metallophosphoesterase domain-containing protein 1 (326 aa).

Belongs to the UPF0046 family.

Functionally, may have metallophosphoesterase activity (in vitro). This chain is Metallophosphoesterase domain-containing protein 1 (Mpped1), found in Mus musculus (Mouse).